The primary structure comprises 183 residues: Photosystem I assembly protein Ycf4 (183 aa).

Helical transmembrane passes span 21–43 (YWWASVLLLGGSSFLVVGLSSRL) and 58–80 (FIPQGLVMCFYGLVGLVVSTYLW).

The protein belongs to the Ycf4 family.

It is found in the plastid. The protein resides in the chloroplast thylakoid membrane. Its function is as follows. Seems to be required for the assembly of the photosystem I complex. The sequence is that of Photosystem I assembly protein Ycf4 from Nephroselmis olivacea (Green alga).